Reading from the N-terminus, the 1168-residue chain is Transcription-repair-coupling factor (1168 aa).

The 162-residue stretch at 633-794 folds into the Helicase ATP-binding domain; it reads DMQKSRPMDR…MLGVRDLSVI (162 aa). Position 646 to 653 (646 to 653) interacts with ATP; it reads GDVGYGKT. Positions 747-750 match the DEEQ box motif; sequence DEEQ. The 162-residue stretch at 808–969 folds into the Helicase C-terminal domain; the sequence is VLEQNMSFIK…GFKIAMRDLN (162 aa).

In the N-terminal section; belongs to the UvrB family. This sequence in the C-terminal section; belongs to the helicase family. RecG subfamily.

Its subcellular location is the cytoplasm. Couples transcription and DNA repair by recognizing RNA polymerase (RNAP) stalled at DNA lesions. Mediates ATP-dependent release of RNAP and its truncated transcript from the DNA, and recruitment of nucleotide excision repair machinery to the damaged site. In Staphylococcus aureus (strain bovine RF122 / ET3-1), this protein is Transcription-repair-coupling factor.